Consider the following 154-residue polypeptide: Interleukin-2 (154 aa).

A signal peptide spans 1–20; it reads MYRMQLLSCIALSLALVTNS. Thr-23 is a glycosylation site (O-linked (GalNAc...) threonine). Cys-78 and Cys-126 are joined by a disulfide.

Belongs to the IL-2 family.

The protein resides in the secreted. Cytokine produced by activated CD4-positive helper T-cells and to a lesser extend activated CD8-positive T-cells and natural killer (NK) cells that plays pivotal roles in the immune response and tolerance. Binds to a receptor complex composed of either the high-affinity trimeric IL-2R (IL2RA/CD25, IL2RB/CD122 and IL2RG/CD132) or the low-affinity dimeric IL-2R (IL2RB and IL2RG). Interaction with the receptor leads to oligomerization and conformation changes in the IL-2R subunits resulting in downstream signaling starting with phosphorylation of JAK1 and JAK3. In turn, JAK1 and JAK3 phosphorylate the receptor to form a docking site leading to the phosphorylation of several substrates including STAT5. This process leads to activation of several pathways including STAT, phosphoinositide-3-kinase/PI3K and mitogen-activated protein kinase/MAPK pathways. Functions as a T-cell growth factor and can increase NK-cell cytolytic activity as well. Promotes strong proliferation of activated B-cells and subsequently immunoglobulin production. Plays a pivotal role in regulating the adaptive immune system by controlling the survival and proliferation of regulatory T-cells, which are required for the maintenance of immune tolerance. Moreover, participates in the differentiation and homeostasis of effector T-cell subsets, including Th1, Th2, Th17 as well as memory CD8-positive T-cells. The polypeptide is Interleukin-2 (IL2) (Cercocebus atys (Sooty mangabey)).